The chain runs to 535 residues: Alpha-1,3-mannosyl-glycoprotein 4-beta-N-acetylglucosaminyltransferase A (535 aa).

At 1 to 6 (MRLRNG) the chain is on the cytoplasmic side. Residues 7–27 (TVATALVFVTSFLTLSWYTTW) form a helical; Signal-anchor for type II membrane protein membrane-spanning segment. Residues 28–63 (QNGKEKLIAYQREFLALKERLRVAEHRISQRSSELN) adopt a coiled-coil conformation. Residues 28-535 (QNGKEKLIAY…NEIHIKKVTS (508 aa)) are Lumenal-facing. Asn77 and Asn458 each carry an N-linked (GlcNAc...) asparagine glycan. Phosphoserine is present on Ser474.

It belongs to the glycosyltransferase 54 family. It depends on a divalent metal cation as a cofactor. N-glycosylated.

It is found in the golgi apparatus membrane. The protein resides in the secreted. The enzyme catalyses N(4)-{beta-D-GlcNAc-(1-&gt;2)-alpha-D-Man-(1-&gt;3)-[beta-D-GlcNAc-(1-&gt;2)-alpha-D-Man-(1-&gt;6)]-beta-D-Man-(1-&gt;4)-beta-D-GlcNAc-(1-&gt;4)-beta-D-GlcNAc}-L-asparaginyl-[protein] + UDP-N-acetyl-alpha-D-glucosamine = N(4)-{beta-D-GlcNAc-(1-&gt;2)-[beta-D-GlcNAc-(1-&gt;4)]-alpha-D-Man-(1-&gt;3)-[beta-D-GlcNAc-(1-&gt;2)-alpha-D-Man-(1-&gt;6)]-beta-D-Man-(1-&gt;4)-beta-D-GlcNAc-(1-&gt;4)-beta-D-GlcNAc}-L-asparaginyl-[protein] + UDP + H(+). It carries out the reaction an N(4)-{beta-D-GlcNAc-(1-&gt;2)-alpha-D-Man-(1-&gt;3)-[alpha-D-Man-(1-&gt;6)]-beta-D-Man-(1-&gt;4)-beta-D-GlcNAc-(1-&gt;4)-beta-D-GlcNAc}-L-asparaginyl-[protein] + UDP-N-acetyl-alpha-D-glucosamine = an N(4)-{beta-D-GlcNAc-(1-&gt;2)-[beta-D-GlcNAc-(1-&gt;4)]-alpha-D-Man-(1-&gt;3)-[alpha-D-Man-(1-&gt;6)]-beta-D-Man-(1-&gt;4)-beta-D-GlcNAc-(1-&gt;4)-beta-D-GlcNAc}-L-asparaginyl-[protein] + UDP + H(+). It catalyses the reaction an N(4)-{beta-D-GlcNAc-(1-&gt;2)-alpha-D-Man-(1-&gt;3)-[beta-D-GlcNAc-(1-&gt;2)-[beta-D-GlcNAc-(1-&gt;6)]-alpha-D-Man-(1-&gt;6)]-beta-D-Man-(1-&gt;4)-beta-D-GlcNAc-(1-&gt;4)-beta-D-GlcNAc}-L-asparaginyl-[protein] + UDP-N-acetyl-alpha-D-glucosamine = an N(4)-{beta-D-GlcNAc-(1-&gt;2)-[beta-D-GlcNAc-(1-&gt;4)]-alpha-D-Man-(1-&gt;3)-[beta-D-GlcNAc-(1-&gt;2)-[beta-D-GlcNAc-(1-&gt;6)]-alpha-D-Man-(1-&gt;6)]-beta-D-Man-(1-&gt;4)-beta-D-GlcNAc-(1-&gt;4)-beta-D-GlcNAc}-L-asparaginyl-[protein] + UDP + H(+). The catalysed reaction is an N(4)-{beta-D-GlcNAc-(1-&gt;2)-alpha-D-Man-(1-&gt;3)-[beta-D-GlcNAc-(1-&gt;2)-alpha-D-Man-(1-&gt;6)]-beta-D-Man-(1-&gt;4)-beta-D-GlcNAc-(1-&gt;4)-[alpha-L-Fuc-(1-&gt;6)]-beta-D-GlcNAc}-L-asparaginyl-[protein] + UDP-N-acetyl-alpha-D-glucosamine = N(4)-{beta-D-GlcNAc-(1-&gt;2)-[beta-D-GlcNAc-(1-&gt;4)]-alpha-D-Man-(1-&gt;3)-[beta-D-GlcNAc-(1-&gt;2)-alpha-D-Man-(1-&gt;6)]-beta-D-Man-(1-&gt;4)-beta-D-GlcNAc-(1-&gt;4)-[alpha-L-Fuc-(1-&gt;6)]-beta-D-GlcNAc}-asparaginyl-[protein] + UDP + H(+). The enzyme catalyses an N(4)-{beta-D-GlcNAc-(1-&gt;2)-alpha-D-Man-(1-&gt;3)-[beta-D-Gal-(1-&gt;4)-beta-D-GlcNAc-(1-&gt;2)-alpha-D-Man-(1-&gt;6)]-beta-D-Man-(1-&gt;4)-beta-D-GlcNAc-(1-&gt;4)-beta-D-GlcNAc}-L-asparaginyl-[protein] + UDP-N-acetyl-alpha-D-glucosamine = an N(4)-{beta-D-GlcNAc-(1-&gt;2)-[beta-D-GlcNAc-(1-&gt;4)]-alpha-D-Man-(1-&gt;3)-[beta-D-Gal-(1-&gt;4)-beta-D-GlcNAc-(1-&gt;2)-alpha-D-Man-(1-&gt;6)]-beta-D-Man-(1-&gt;4)-beta-D-GlcNAc-(1-&gt;4)-beta-D-GlcNAc}-L-asparaginyl-[protein] + UDP + H(+). It carries out the reaction N(4)-{beta-D-GlcNAc-(1-&gt;2)-alpha-D-Man-(1-&gt;3)-[alpha-D-Man-(1-&gt;3)-{alpha-D-Man-(1-&gt;6)}-alpha-D-Man-(1-&gt;6)]-beta-D-Man-(1-&gt;4)-beta-D-GlcNAc-(1-&gt;4)-beta-D-GlcNAc}-asparaginyl-[protein] + UDP-N-acetyl-alpha-D-glucosamine = N(4)-{beta-D-GlcNAc-(1-&gt;2)-[beta-D-GlcNAc-(1-&gt;4)]-alpha-D-Man-(1-&gt;3)-[alpha-D-Man-(1-&gt;3)-{alpha-D-Man-(1-&gt;6)}-alpha-D-Man-(1-&gt;6)]-beta-D-Man-(1-&gt;4)-beta-D-GlcNAc-(1-&gt;4)-beta-D-GlcNAc}-asparaginyl-[protein] + UDP + H(+). It catalyses the reaction N(4)-{beta-D-GlcNAc-(1-&gt;2)-alpha-D-Man-(1-&gt;3)-beta-D-Man-(1-&gt;4)-beta-D-GlcNAc-(1-&gt;4)-beta-D-GlcNAc}-asparaginyl-[protein] + UDP-N-acetyl-alpha-D-glucosamine = N(4)-{beta-D-GlcNAc-(1-&gt;2)-[beta-D-GlcNAc-(1-&gt;4)]-alpha-D-Man-(1-&gt;3)-beta-D-Man-(1-&gt;4)-beta-D-GlcNAc-(1-&gt;4)-beta-D-GlcNAc}-asparaginyl-[protein] + UDP + H(+). The protein operates within protein modification; protein glycosylation. With respect to regulation, inhibited by UDP. Functionally, glycosyltransferase that catalyze the transfer of GlcNAc from UDP-GlcNAc to the GlcNAcbeta1-2Manalpha1-3 arm of the core structure of N-linked glycans through a beta1-4 linkage and participates in the production of tri- and tetra-antennary N-linked sugar chains. Involved in glucose transport by mediating SLC2A2/GLUT2 glycosylation, thereby controlling cell-surface expression of SLC2A2 in pancreatic beta cells. This is Alpha-1,3-mannosyl-glycoprotein 4-beta-N-acetylglucosaminyltransferase A from Mus musculus (Mouse).